A 344-amino-acid polypeptide reads, in one-letter code: Methionine import ATP-binding protein MetN (344 aa).

Residues 2 to 241 (IELKNIGKQF…PTTQLAQQFI (240 aa)) enclose the ABC transporter domain. 38-45 (GASGAGKS) contacts ATP.

The protein belongs to the ABC transporter superfamily. Methionine importer (TC 3.A.1.24) family. In terms of assembly, the complex is composed of two ATP-binding proteins (MetN), two transmembrane proteins (MetI) and a solute-binding protein (MetQ).

The protein localises to the cell inner membrane. The enzyme catalyses L-methionine(out) + ATP + H2O = L-methionine(in) + ADP + phosphate + H(+). The catalysed reaction is D-methionine(out) + ATP + H2O = D-methionine(in) + ADP + phosphate + H(+). Functionally, part of the ABC transporter complex MetNIQ involved in methionine import. Responsible for energy coupling to the transport system. The polypeptide is Methionine import ATP-binding protein MetN (Haemophilus ducreyi (strain 35000HP / ATCC 700724)).